The sequence spans 261 residues: Carbonic anhydrase 1 (261 aa).

Residue alanine 2 is modified to N-acetylalanine. The region spanning 4-261 (PDWGYDGENG…LNGRTVKASF (258 aa)) is the Alpha-carbonic anhydrase domain. Histidine 65 (proton donor/acceptor) is an active-site residue. Zn(2+)-binding residues include histidine 95, histidine 97, and histidine 120. Substrate is bound by residues threonine 200 and 200–201 (TH).

The protein belongs to the alpha-carbonic anhydrase family. The cofactor is Zn(2+).

Its subcellular location is the cytoplasm. The enzyme catalyses hydrogencarbonate + H(+) = CO2 + H2O. It catalyses the reaction urea = cyanamide + H2O. Its activity is regulated as follows. Inhibited by acetazolamide. Functionally, catalyzes the reversible hydration of carbon dioxide. Can hydrate cyanamide to urea. This Bos taurus (Bovine) protein is Carbonic anhydrase 1 (CA1).